Consider the following 334-residue polypeptide: Protein-methionine-sulfoxide reductase catalytic subunit MsrP (334 aa).

Residues 1–44 (MKAVNPLTENDVTPESLFNARRRTVLKMLGMSAAALSLPGAARA) constitute a signal peptide (tat-type signal). Residues Asn-88, 91 to 92 (YE), Cys-146, Thr-181, Asn-233, Arg-238, and 249 to 251 (GIK) contribute to the Mo-molybdopterin site.

This sequence belongs to the MsrP family. In terms of assembly, heterodimer of a catalytic subunit (MsrP) and a heme-binding subunit (MsrQ). The cofactor is Mo-molybdopterin. Predicted to be exported by the Tat system. The position of the signal peptide cleavage has not been experimentally proven.

It localises to the periplasm. It carries out the reaction L-methionyl-[protein] + a quinone + H2O = L-methionyl-(S)-S-oxide-[protein] + a quinol. It catalyses the reaction L-methionyl-[protein] + a quinone + H2O = L-methionyl-(R)-S-oxide-[protein] + a quinol. In terms of biological role, part of the MsrPQ system that repairs oxidized periplasmic proteins containing methionine sulfoxide residues (Met-O), using respiratory chain electrons. Thus protects these proteins from oxidative-stress damage caused by reactive species of oxygen and chlorine generated by the host defense mechanisms. MsrPQ is essential for the maintenance of envelope integrity under bleach stress, rescuing a wide series of structurally unrelated periplasmic proteins from methionine oxidation. The catalytic subunit MsrP is non-stereospecific, being able to reduce both (R-) and (S-) diastereoisomers of methionine sulfoxide. The sequence is that of Protein-methionine-sulfoxide reductase catalytic subunit MsrP from Erwinia tasmaniensis (strain DSM 17950 / CFBP 7177 / CIP 109463 / NCPPB 4357 / Et1/99).